Here is a 150-residue protein sequence, read N- to C-terminus: uncharacterized protein (150 aa).

Residues 5–66 form the HTH asnC-type domain; sequence LDKVDRRLLE…KPNYKKLNLG (62 aa). The H-T-H motif DNA-binding region spans 24 to 43; it reads IATLSKKLGIPRTTVHYRIK.

This is an uncharacterized protein from Pyrococcus abyssi (strain GE5 / Orsay).